A 1576-amino-acid chain; its full sequence is Pentafunctional AROM polypeptide (1576 aa).

Residues 1 to 387 (MGSTTFENPT…YEPKASVVED (387 aa)) are 3-dehydroquinate synthase. NAD(+) is bound by residues 49–51 (DTN), 86–89 (ENSK), 117–119 (GGV), and Asp122. Residue Arg133 coordinates 7-phospho-2-dehydro-3-deoxy-D-arabino-heptonate. Residue 142–143 (TT) participates in NAD(+) binding. 7-phospho-2-dehydro-3-deoxy-D-arabino-heptonate is bound by residues Asp149 and Lys155. Position 164 (Lys164) interacts with NAD(+). Residue Asn165 coordinates 7-phospho-2-dehydro-3-deoxy-D-arabino-heptonate. NAD(+)-binding positions include 182–185 (FLET) and Asn193. A Zn(2+)-binding site is contributed by Glu197. Residues 197–200 (EVVK) and Lys253 contribute to the 7-phospho-2-dehydro-3-deoxy-D-arabino-heptonate site. Glu263 functions as the Proton acceptor; for 3-dehydroquinate synthase activity in the catalytic mechanism. 7-phospho-2-dehydro-3-deoxy-D-arabino-heptonate-binding positions include 267 to 271 (RNILN) and His274. Position 274 (His274) interacts with Zn(2+). His278 functions as the Proton acceptor; for 3-dehydroquinate synthase activity in the catalytic mechanism. 7-phospho-2-dehydro-3-deoxy-D-arabino-heptonate-binding residues include His290 and Lys359. His290 provides a ligand contact to Zn(2+). Positions 400–841 (VRPSVPETLN…WDILSKSFQV (442 aa)) are EPSP synthase. The For EPSP synthase activity role is filled by Cys823. Positions 863 to 1055 (DKSIFIIGMR…RNKPQSFFVS (193 aa)) are shikimate kinase. Residue 870–877 (GMRGAGKT) coordinates ATP. The segment at 1056 to 1276 (LTMPDISGAA…AAPGQLSAAE (221 aa)) is 3-dehydroquinase. His1179 acts as the Proton acceptor; for 3-dehydroquinate dehydratase activity in catalysis. Residue Lys1207 is the Schiff-base intermediate with substrate; for 3-dehydroquinate dehydratase activity of the active site. The interval 1289 to 1576 (PKSFYLFGTP…RAAVMGDSTA (288 aa)) is shikimate dehydrogenase.

This sequence in the N-terminal section; belongs to the sugar phosphate cyclases superfamily. Dehydroquinate synthase family. In the 2nd section; belongs to the EPSP synthase family. It in the 3rd section; belongs to the shikimate kinase family. The protein in the 4th section; belongs to the type-I 3-dehydroquinase family. This sequence in the C-terminal section; belongs to the shikimate dehydrogenase family. Homodimer. The cofactor is Zn(2+).

It localises to the cytoplasm. The enzyme catalyses 7-phospho-2-dehydro-3-deoxy-D-arabino-heptonate = 3-dehydroquinate + phosphate. It carries out the reaction 3-dehydroquinate = 3-dehydroshikimate + H2O. It catalyses the reaction shikimate + NADP(+) = 3-dehydroshikimate + NADPH + H(+). The catalysed reaction is shikimate + ATP = 3-phosphoshikimate + ADP + H(+). The enzyme catalyses 3-phosphoshikimate + phosphoenolpyruvate = 5-O-(1-carboxyvinyl)-3-phosphoshikimate + phosphate. The protein operates within metabolic intermediate biosynthesis; chorismate biosynthesis; chorismate from D-erythrose 4-phosphate and phosphoenolpyruvate: step 2/7. It functions in the pathway metabolic intermediate biosynthesis; chorismate biosynthesis; chorismate from D-erythrose 4-phosphate and phosphoenolpyruvate: step 3/7. It participates in metabolic intermediate biosynthesis; chorismate biosynthesis; chorismate from D-erythrose 4-phosphate and phosphoenolpyruvate: step 4/7. Its pathway is metabolic intermediate biosynthesis; chorismate biosynthesis; chorismate from D-erythrose 4-phosphate and phosphoenolpyruvate: step 5/7. The protein operates within metabolic intermediate biosynthesis; chorismate biosynthesis; chorismate from D-erythrose 4-phosphate and phosphoenolpyruvate: step 6/7. Its function is as follows. The AROM polypeptide catalyzes 5 consecutive enzymatic reactions in prechorismate polyaromatic amino acid biosynthesis. This is Pentafunctional AROM polypeptide from Sclerotinia sclerotiorum (strain ATCC 18683 / 1980 / Ss-1) (White mold).